Reading from the N-terminus, the 194-residue chain is ATP-dependent Clp protease proteolytic subunit (194 aa).

The active-site Nucleophile is Ser98. Residue His123 is part of the active site.

The protein belongs to the peptidase S14 family. Fourteen ClpP subunits assemble into 2 heptameric rings which stack back to back to give a disk-like structure with a central cavity, resembling the structure of eukaryotic proteasomes.

Its subcellular location is the cytoplasm. The enzyme catalyses Hydrolysis of proteins to small peptides in the presence of ATP and magnesium. alpha-casein is the usual test substrate. In the absence of ATP, only oligopeptides shorter than five residues are hydrolyzed (such as succinyl-Leu-Tyr-|-NHMec, and Leu-Tyr-Leu-|-Tyr-Trp, in which cleavage of the -Tyr-|-Leu- and -Tyr-|-Trp bonds also occurs).. Functionally, cleaves peptides in various proteins in a process that requires ATP hydrolysis. Has a chymotrypsin-like activity. Plays a major role in the degradation of misfolded proteins. The protein is ATP-dependent Clp protease proteolytic subunit of Clostridium botulinum (strain Hall / ATCC 3502 / NCTC 13319 / Type A).